The sequence spans 149 residues: Conglutin delta 3 (149 aa).

Residues 1-22 (MAKLTILIALVAALVLVVHTSA) form the signal peptide. 4 disulfides stabilise this stretch: Cys-30-Cys-98, Cys-42-Cys-86, Cys-87-Cys-134, and Cys-100-Cys-142.

The protein belongs to the 2S seed storage albumins family. As to quaternary structure, heterodimer of a small chain and a large chain; disulfide-linked.

Its subcellular location is the endoplasmic reticulum. The sequence is that of Conglutin delta 3 from Lupinus angustifolius (Narrow-leaved blue lupine).